Consider the following 92-residue polypeptide: Small nuclear ribonucleoprotein E (92 aa).

Residues 18–92 (INLIFRYLQN…NITLLQSVSN (75 aa)) form the Sm domain.

It belongs to the snRNP Sm proteins family. Core component of the spliceosomal U1, U2, U4 and U5 small nuclear ribonucleoproteins (snRNPs), the building blocks of the spliceosome. Most spliceosomal snRNPs contain a common set of Sm proteins, SNRPB, SNRPD1, SNRPD2, SNRPD3, SNRPE, SNRPF and SNRPG that assemble in a heptameric protein ring on the Sm site of the small nuclear RNA to form the core snRNP. Component of the U1 snRNP. The U1 snRNP is composed of the U1 snRNA and the 7 core Sm proteins SNRPB, SNRPD1, SNRPD2, SNRPD3, SNRPE, SNRPF and SNRPG, and at least three U1 snRNP-specific proteins SNRNP70/U1-70K, SNRPA/U1-A and SNRPC/U1-C. Component of the U4/U6-U5 tri-snRNP complex composed of the U4, U6 and U5 snRNAs and at least PRPF3, PRPF4, PRPF6, PRPF8, PRPF31, SNRNP200, TXNL4A, SNRNP40, SNRPB, SNRPD1, SNRPD2, SNRPD3, SNRPE, SNRPF, SNRPG, DDX23, CD2BP2, PPIH, SNU13, EFTUD2, SART1 and USP39, plus LSM2, LSM3, LSM4, LSM5, LSM6, LSM7 and LSM8. Component of the U7 snRNP complex, or U7 Sm protein core complex, that is composed of the U7 snRNA and at least LSM10, LSM11, SNRPB, SNRPD3, SNRPE, SNRPF and SNRPG; the complex does not contain SNRPD1 and SNRPD2. Component of the minor spliceosome, which splices U12-type introns. Part of the SMN-Sm complex that contains SMN1, GEMIN2/SIP1, DDX20/GEMIN3, GEMIN4, GEMIN5, GEMIN6, GEMIN7, GEMIN8, STRAP/UNRIP and the Sm proteins SNRPB, SNRPD1, SNRPD2, SNRPD3, SNRPE, SNRPF and SNRPG; catalyzes core snRNPs assembly. Forms a 6S pICln-Sm complex composed of CLNS1A/pICln, SNRPD1, SNRPD2, SNRPE, SNRPF and SNRPG; ring-like structure where CLNS1A/pICln mimics additional Sm proteins and which is unable to assemble into the core snRNP. Interacts with SMN1; the interaction is direct. Interacts with GEMIN2 (via N-terminus); the interaction is direct. Interacts with SNRPF; the interaction is direct. Interacts with SNRPG; the interaction is direct.

The protein localises to the cytoplasm. It localises to the cytosol. Its subcellular location is the nucleus. In terms of biological role, plays a role in pre-mRNA splicing as a core component of the spliceosomal U1, U2, U4 and U5 small nuclear ribonucleoproteins (snRNPs), the building blocks of the spliceosome. Component of both the pre-catalytic spliceosome B complex and activated spliceosome C complexes. As a component of the minor spliceosome, involved in the splicing of U12-type introns in pre-mRNAs. As part of the U7 snRNP it is involved in histone 3'-end processing. This chain is Small nuclear ribonucleoprotein E (SNRPE), found in Sus scrofa (Pig).